The following is a 413-amino-acid chain: Multidrug resistance protein MdtA (413 aa).

A signal peptide spans 1-32 (MNAKRIRGLLIFAAVIAIAVLIWRHFTQTSPA). A compositionally biased stretch (polar residues) spans 32-46 (AAPGTSEQHAARTSH). Residues 32-59 (AAPGTSEQHAARTSHSGNNSSGNGGGRR) are disordered.

This sequence belongs to the membrane fusion protein (MFP) (TC 8.A.1) family. Part of a tripartite efflux system composed of MdtA, MdtB and MdtC.

It localises to the cell inner membrane. The protein is Multidrug resistance protein MdtA of Pectobacterium carotovorum subsp. carotovorum (strain PC1).